The primary structure comprises 301 residues: Glutathione transport system permease protein GsiD (301 aa).

6 helical membrane-spanning segments follow: residues Val-37 to Tyr-57, Leu-103 to Leu-123, Val-141 to Gly-161, Met-162 to Arg-182, Ile-220 to Phe-240, and Val-264 to Phe-284. The region spanning Thr-99 to Gly-288 is the ABC transmembrane type-1 domain.

Belongs to the binding-protein-dependent transport system permease family. The complex is composed of two ATP-binding proteins (GsiA), two transmembrane proteins (GsiC and GsiD) and a solute-binding protein (GsiB).

The protein localises to the cell inner membrane. Part of the ABC transporter complex GsiABCD involved in glutathione import. Probably responsible for the translocation of the substrate across the membrane. The sequence is that of Glutathione transport system permease protein GsiD from Pectobacterium atrosepticum (strain SCRI 1043 / ATCC BAA-672) (Erwinia carotovora subsp. atroseptica).